The following is a 139-amino-acid chain: Large ribosomal subunit protein uL16 (139 aa).

Residues 1 to 21 show a composition bias toward basic residues; it reads MLSPRKTKFRKQHRGRMRGKA. The interval 1 to 23 is disordered; the sequence is MLSPRKTKFRKQHRGRMRGKATR.

Belongs to the universal ribosomal protein uL16 family. Part of the 50S ribosomal subunit.

Functionally, binds 23S rRNA and is also seen to make contacts with the A and possibly P site tRNAs. The sequence is that of Large ribosomal subunit protein uL16 from Acaryochloris marina (strain MBIC 11017).